Reading from the N-terminus, the 357-residue chain is 3-isopropylmalate dehydrogenase (357 aa).

Gly75–Glu88 serves as a coordination point for NAD(+). Positions 96, 106, 134, and 222 each coordinate substrate. Asp222, Asp246, and Asp250 together coordinate Mg(2+). Gly279–Asn291 provides a ligand contact to NAD(+).

The protein belongs to the isocitrate and isopropylmalate dehydrogenases family. LeuB type 1 subfamily. Homodimer. It depends on Mg(2+) as a cofactor. Requires Mn(2+) as cofactor.

The protein resides in the cytoplasm. The catalysed reaction is (2R,3S)-3-isopropylmalate + NAD(+) = 4-methyl-2-oxopentanoate + CO2 + NADH. It functions in the pathway amino-acid biosynthesis; L-leucine biosynthesis; L-leucine from 3-methyl-2-oxobutanoate: step 3/4. Catalyzes the oxidation of 3-carboxy-2-hydroxy-4-methylpentanoate (3-isopropylmalate) to 3-carboxy-4-methyl-2-oxopentanoate. The product decarboxylates to 4-methyl-2 oxopentanoate. This Moorella thermoacetica (strain ATCC 39073 / JCM 9320) protein is 3-isopropylmalate dehydrogenase.